A 400-amino-acid chain; its full sequence is Carnosine N-methyltransferase (400 aa).

The tract at residues 1–49 is disordered; the sequence is MQRRRRAPPASQPAQDSGHSEEVEVQFSAGRLGSAAPAGPPVRGTAEDE. Positions 155, 158, 199, 220, 286, 287, and 303 each coordinate S-adenosyl-L-methionine. Residue Asp-307 coordinates carnosine. Residue Tyr-315 participates in S-adenosyl-L-methionine binding. Carnosine is bound by residues His-338 and Tyr-389.

The protein belongs to the carnosine N-methyltransferase family. Homodimer. Each monomer accommodates one molecule of carnosine in its active pocket, precisely anchoring the histidine imidazole ring such that only N1 is exposed and deprotonated for methylation. As to expression, expressed at higher level in skeletal muscle compared to other tissues.

The protein resides in the cytoplasm. It is found in the cytosol. Its subcellular location is the nucleus. It carries out the reaction carnosine + S-adenosyl-L-methionine = anserine + S-adenosyl-L-homocysteine + H(+). Its function is as follows. N-methyltransferase that catalyzes the formation of anserine (beta-alanyl-N(Pi)-methyl-L-histidine) from carnosine. Anserine, a methylated derivative of carnosine (beta-alanyl-L-histidine), is an abundant constituent of vertebrate skeletal muscles. Also methylates other L-histidine-containing di- and tripeptides such as Gly-Gly-His, Gly-His and homocarnosine (GABA-His). This Rattus norvegicus (Rat) protein is Carnosine N-methyltransferase.